Here is a 328-residue protein sequence, read N- to C-terminus: Naphthalene 1,2-dioxygenase/salicylate 5-hydroxylase systems, ferredoxin--NAD(P)(+), reductase component (328 aa).

A 2Fe-2S ferredoxin-type domain is found at 1–89 (MELVVEPLNL…DCTIEIPESD (89 aa)). [2Fe-2S] cluster contacts are provided by Cys-35, Cys-40, Cys-43, and Cys-73. The 98-residue stretch at 96–193 (ARIVKGTVTA…SGPLGTAYLR (98 aa)) folds into the FAD-binding FR-type domain.

This sequence belongs to the bacterial ring-hydroxylating dioxygenase ferredoxin reductase family. In terms of assembly, ferredoxin reductase NagAa belongs to both the salicylate 5-hydroxylase (S5H) and the naphthalene 1,2-dioxygenase (NDO) multicomponent enzyme systems. The NDO multicomponent enzyme system is composed of an electron transfer component and a dioxygenase component (iron sulfur protein (ISP)). The electron transfer component is composed of a ferredoxin reductase (NagAa) and a ferredoxin (NagAb), and the dioxygenase component is formed by a large alpha subunit (NagAc) and a small beta subunit (NagAd). The S5H multicomponent enzyme system is composed of an electron transfer component and a monooxygenase component. The electron transfer component is comprised of a ferredoxin reductase (NagAa) and a ferredoxin (NagAb), and the monooxygenase component is formed by a large subunit (NagG) and a small subunit (NagH). The cofactor is [2Fe-2S] cluster. Requires FAD as cofactor.

The enzyme catalyses 2 reduced [2Fe-2S]-[ferredoxin] + NAD(+) + H(+) = 2 oxidized [2Fe-2S]-[ferredoxin] + NADH. It carries out the reaction 2 reduced [2Fe-2S]-[ferredoxin] + NADP(+) + H(+) = 2 oxidized [2Fe-2S]-[ferredoxin] + NADPH. The protein operates within aromatic compound metabolism; naphthalene degradation. In terms of biological role, component of two multicomponent enzyme systems which are involved in the catabolism of naphthalene. Plays a role as an electron transfer component for both salicylate 5-hydroxylase (S5H) and naphthalene 1,2-dioxygenase (NDO) systems, by transferring electrons from NAD(P)H to the oxygenase component via the ferredoxin NagAb. The electron transport chain from the two systems can use both NADH and NADPH as electron donors at approximately similar rates. This Ralstonia sp protein is Naphthalene 1,2-dioxygenase/salicylate 5-hydroxylase systems, ferredoxin--NAD(P)(+), reductase component.